A 434-amino-acid chain; its full sequence is Trigger factor (434 aa).

A PPIase FKBP-type domain is found at 163–248 (GDTAVIDFAG…VHDIKRKELP (86 aa)).

This sequence belongs to the FKBP-type PPIase family. Tig subfamily.

It is found in the cytoplasm. The catalysed reaction is [protein]-peptidylproline (omega=180) = [protein]-peptidylproline (omega=0). In terms of biological role, involved in protein export. Acts as a chaperone by maintaining the newly synthesized protein in an open conformation. Functions as a peptidyl-prolyl cis-trans isomerase. The polypeptide is Trigger factor (Shouchella clausii (strain KSM-K16) (Alkalihalobacillus clausii)).